The sequence spans 719 residues: Leucine-rich repeat and fibronectin type-III domain-containing protein 5 (719 aa).

A signal peptide spans 1–17; sequence MEKILFYLFLIGIAVKA. In terms of domain architecture, LRRNT spans 18 to 51; the sequence is QICPKRCVCQILSPNLATLCAKKGLLFVPPNIDR. The Extracellular segment spans residues 18-529; sequence QICPKRCVCQ…MQSQFLGGTM (512 aa). LRR repeat units lie at residues 52-73, 76-97, 100-121, 124-145, 148-169, 172-193, and 196-217; these read RTVELRLADNFVTNIKRKDFAN, SLVDLTLSRNTISFITPHAFAD, NLRALHLNSNRLTKITNDMFSG, NLHHLILNNNQLTLISSTAFDD, ALEELDLSYNNLETIPWDAVEK, SLHTLSLDHNMIDNIPKGTFSH, and KMTRLDVTSNKLQKLPPDPLFQ. Residue asparagine 73 is glycosylated (N-linked (GlcNAc...) asparagine). Positions 240–286 constitute an LRRCT domain; that stretch reads NPLHCNCELLWLRRLSREDDLETCASPPLLTGRYFWSIPEEEFLCEP. One can recognise an Ig-like domain in the interval 287 to 373; sequence PLITRHTHEM…GEATQIVDLH (87 aa). A disulfide bond links cysteine 308 and cysteine 357. 5 N-linked (GlcNAc...) asparagine glycosylation sites follow: asparagine 330, asparagine 339, asparagine 382, asparagine 406, and asparagine 452. The disordered stretch occupies residues 385–414; that stretch reads NHIHEPDPGSSDISTSTKSGSNTSSSNGDT. Residues 393–414 show a composition bias toward low complexity; the sequence is GSSDISTSTKSGSNTSSSNGDT. Residues 414–503 form the Fibronectin type-III domain; the sequence is TKLSQDKIVV…ITSLTATRVV (90 aa). Residues 530–550 traverse the membrane as a helical segment; it reads IIIIGGIIVASVLVFIIILMI. The Cytoplasmic portion of the chain corresponds to 551–719; it reads RYKVCNNNGQ…VQETQRLELI (169 aa). Positions 615–627 are enriched in low complexity; that stretch reads ETCSSQDSSTTTS. Residues 615–694 form a disordered region; that stretch reads ETCSSQDSST…SVTEGPTSKR (80 aa). Polar residues-rich tracts occupy residues 628–641 and 649–677; these read ALPPSWTSSTSVSQ and TKPSTEPQNEAVTNVESQNTNRNNSTALQ.

This sequence belongs to the LRFN family. As to quaternary structure, can form heteromeric complexes with LRFN1, LRFN2, LRFN3 and LFRN4. Able to form homomeric complexes across cell junctions, between adjacent cells. Does not interact with DLG1, DLG2, DLG3 and DLG4.

It localises to the membrane. Functionally, cell adhesion molecule that mediates homophilic cell-cell adhesion in a Ca(2+)-independent manner. Promotes neurite outgrowth in hippocampal neurons. The chain is Leucine-rich repeat and fibronectin type-III domain-containing protein 5 (LRFN5) from Homo sapiens (Human).